Here is a 265-residue protein sequence, read N- to C-terminus: Mlc titration factor A (265 aa).

Zn(2+) contacts are provided by His-111, His-148, His-152, and Glu-211.

Belongs to the MtfA family. Interacts with Mlc. Zn(2+) is required as a cofactor.

The protein resides in the cytoplasm. Involved in the modulation of the activity of the glucose-phosphotransferase system (glucose-PTS). Interacts with the transcriptional repressor Mlc, preventing its interaction with DNA and leading to the modulation of expression of genes regulated by Mlc, including ptsG, which encodes the PTS system glucose-specific EIICB component. In terms of biological role, shows zinc-dependent metallopeptidase activity. This chain is Mlc titration factor A, found in Escherichia fergusonii.